A 623-amino-acid polypeptide reads, in one-letter code: Probable methyltransferase PMT8 (623 aa).

Topologically, residues 1–13 are cytoplasmic; sequence MMRGRSDGGLKKR. A helical; Signal-anchor for type II membrane protein transmembrane segment spans residues 14-34; sequence LIASVCVVALFVCFLFMYYGS. At 35-623 the chain is on the lumenal side; the sequence is SSQGASALEY…LTSESLRDSE (589 aa). N-linked (GlcNAc...) asparagine glycans are attached at residues asparagine 204, asparagine 350, and asparagine 588.

Belongs to the methyltransferase superfamily.

The protein localises to the golgi apparatus membrane. The chain is Probable methyltransferase PMT8 from Arabidopsis thaliana (Mouse-ear cress).